Reading from the N-terminus, the 327-residue chain is Interleukin-12 subunit beta (327 aa).

The N-terminal stretch at 1–22 is a signal peptide; that stretch reads MCHQKLTISWFAVVLLASPLMA. The Ig-like C2-type domain occupies 23–106; it reads IWELEKDVYV…LSHSRLLLHK (84 aa). A disulfide bridge links cysteine 50 with cysteine 90. N-linked (GlcNAc...) asparagine glycans are attached at residues asparagine 125, asparagine 135, asparagine 223, and asparagine 315. Residues 238–327 form the Fibronectin type-III domain; that stretch reads PPKNLQLKPL…WSRWVSVPCS (90 aa).

This sequence belongs to the IL-12B family. As to quaternary structure, heterodimer with IL12A; disulfide-linked. The heterodimer is known as interleukin IL-12. Heterodimer with IL23A; disulfide-linked. The heterodimer is known as interleukin IL-23. Also secreted as a monomer. Interacts with NBR1; this interaction promotes IL-12 secretion.

It localises to the secreted. Functionally, cytokine that can act as a growth factor for activated T and NK cells, enhance the lytic activity of NK/lymphokine-activated killer cells, and stimulate the production of IFN-gamma by resting PBMC. In terms of biological role, associates with IL23A to form the IL-23 interleukin, a heterodimeric cytokine which functions in innate and adaptive immunity. IL-23 may constitute with IL-17 an acute response to infection in peripheral tissues. IL-23 binds to a heterodimeric receptor complex composed of IL12RB1 and IL23R, activates the Jak-Stat signaling cascade, stimulates memory rather than naive T-cells and promotes production of pro-inflammatory cytokines. IL-23 induces autoimmune inflammation and thus may be responsible for autoimmune inflammatory diseases and may be important for tumorigenesis. The sequence is that of Interleukin-12 subunit beta (IL12B) from Mesocricetus auratus (Golden hamster).